The chain runs to 276 residues: Polyamine aminopropyltransferase (276 aa).

Residues 3-236 (ELWYTEKQTK…GLWTFTIGSK (234 aa)) enclose the PABS domain. Gln32 lines the S-methyl-5'-thioadenosine pocket. 2 residues coordinate spermidine: His63 and Asp87. S-methyl-5'-thioadenosine is bound by residues Asp107 and 138–139 (DG). Asp156 serves as the catalytic Proton acceptor. 156-159 (DSTE) contributes to the spermidine binding site. Position 163 (Pro163) interacts with S-methyl-5'-thioadenosine.

It belongs to the spermidine/spermine synthase family. Homodimer or homotetramer.

It is found in the cytoplasm. The catalysed reaction is S-adenosyl 3-(methylsulfanyl)propylamine + putrescine = S-methyl-5'-thioadenosine + spermidine + H(+). The protein operates within amine and polyamine biosynthesis; spermidine biosynthesis; spermidine from putrescine: step 1/1. Its function is as follows. Involved in the cell growth and proliferation. Catalyzes the irreversible transfer of a propylamine group from the amino donor S-adenosylmethioninamine (decarboxy-AdoMet) to putrescine (1,4-diaminobutane) to yield spermidine. This is Polyamine aminopropyltransferase from Bacillus subtilis (strain 168).